Reading from the N-terminus, the 581-residue chain is Kelch-like protein 30 (581 aa).

The 68-residue stretch at 33–100 (ADVTLLVGDQ…VYTGRLTITQ (68 aa)) folds into the BTB domain. The 103-residue stretch at 135–237 (CLGICEFGEQ…PRPCVQQLLA (103 aa)) folds into the BACK domain. Kelch repeat units follow at residues 280–327 (EEDE…ALNS), 328–378 (DVYV…ALNG), 379–423 (EIYA…GCQG), 425–472 (LYLV…ALNG), 474–514 (LYLI…PLGD), and 515–564 (LLYV…TIFL).

This Mus musculus (Mouse) protein is Kelch-like protein 30 (Klhl30).